The chain runs to 220 residues: Vesicle-associated membrane protein 7 (220 aa).

Position 2 is an N-acetylalanine (A2). Topologically, residues A2–K188 are cytoplasmic. The region spanning V7–L110 is the Longin domain. The v-SNARE coiled-coil homology domain maps to R125–K185. S167 and S168 each carry phosphoserine. A helical; Anchor for type IV membrane protein transmembrane segment spans residues L189–C209. At G210–K220 the chain is on the vesicular side.

Belongs to the synaptobrevin family. As to quaternary structure, may interact with STX17. Component of the SNARE complex composed of STX4, SNAP23 and VAMP7 that binds SYT7 during lysosomal exocytosis. Component of the SNARE complex composed of STX7, STX8, VAMP7 and VTI1B that is required for heterotypic fusion of late endosomes with lysosomes. Interacts with PICALM. Interacts with RAB21. In terms of tissue distribution, expressed in brain, kidney, liver, lung, spleen and thymus. Not expressed in heart and skeletal muscle.

The protein resides in the cytoplasmic vesicle. It is found in the secretory vesicle membrane. Its subcellular location is the golgi apparatus. It localises to the trans-Golgi network membrane. The protein localises to the late endosome membrane. The protein resides in the lysosome membrane. It is found in the endoplasmic reticulum membrane. Its subcellular location is the phagosome membrane. It localises to the synapse. The protein localises to the synaptosome. In terms of biological role, involved in the targeting and/or fusion of transport vesicles to their target membrane during transport of proteins from the early endosome to the lysosome. Required for heterotypic fusion of late endosomes with lysosomes and homotypic lysosomal fusion. Required for calcium regulated lysosomal exocytosis. Involved in the export of chylomicrons from the endoplasmic reticulum to the cis Golgi. Required for exocytosis of mediators during eosinophil and neutrophil degranulation, and target cell killing by natural killer cells. Required for focal exocytosis of late endocytic vesicles during phagosome formation. In Rattus norvegicus (Rat), this protein is Vesicle-associated membrane protein 7 (Vamp7).